We begin with the raw amino-acid sequence, 638 residues long: CTTNBP2 N-terminal-like protein (638 aa).

Residues 87-284 (MKQCKNMQER…KDLEAAQQHR (198 aa)) are a coiled coil. Disordered regions lie at residues 280–303 (AQQH…TATE), 360–430 (RELT…PCSS), 463–490 (RHKF…LSPT), and 514–621 (NQGP…CSPS). At Ser-285 the chain carries Phosphoserine. Residues 360–371 (RELTSDSSTENQ) are compositionally biased toward polar residues. 2 stretches are compositionally biased toward low complexity: residues 401 to 430 (TMPS…PCSS) and 467 to 477 (QSQADQDQQAS). Residues Ser-481, Ser-488, Ser-522, Ser-526, Ser-559, Ser-562, and Ser-567 each carry the phosphoserine modification. Positions 514-528 (NQGPIKPVSPNSSPF) are enriched in polar residues. Phosphothreonine occurs at positions 569 and 589. Over residues 589–620 (TPSQSATTPVTKTHSQASSLAATEDLASSCSP) the composition is skewed to polar residues. Phosphoserine is present on Ser-591.

Interacts with CTTN/cortactin; this interaction may redistribute CTTN to stress fibers. May form homomers. Associates with the core of STRIPAK complexes composed of PP2A catalytic and scaffolding subunits, the striatins (PP2A regulatory subunits), the striatin-associated proteins MOB4, STRIP1 and STRIP2, PDCD10 and members of the STE20 kinases, such as STK24 and STK26. Predominantly expressed in skin, also detectable in spleen and lung (at protein level). Very low levels, if any, in brain (at protein level).

Its subcellular location is the cell projection. It localises to the lamellipodium. It is found in the cytoplasm. The protein localises to the cytoskeleton. The protein resides in the stress fiber. Functionally, regulates lamellipodial actin dynamics in a CTTN-dependent manner. Associates with core striatin-interacting phosphatase and kinase (STRIPAK) complex to form CTTNBP2NL-STRIPAK complexes. STRIPAK complexes have critical roles in protein (de)phosphorylation and are regulators of multiple signaling pathways including Hippo, MAPK, nuclear receptor and cytoskeleton remodeling. Different types of STRIPAK complexes are involved in a variety of biological processes such as cell growth, differentiation, apoptosis, metabolism and immune regulation. The protein is CTTNBP2 N-terminal-like protein (Cttnbp2nl) of Mus musculus (Mouse).